The primary structure comprises 845 residues: ATP-binding cassette sub-family F member 1 (845 aa).

Residues 1–261 (MPKAPKQQPP…HLSKKEKKKL (261 aa)) are disordered. Phosphoserine occurs at positions 22 and 24. Basic residues predominate over residues 29-39 (KKGKKDKKIKK). Over residues 47–64 (VEDKQAGEEEKVLKEKEQ) the composition is skewed to basic and acidic residues. A compositionally biased stretch (basic residues) spans 73–85 (QKKKRDTRKGRRK). S105 is modified (phosphoserine). At T108 the chain carries Phosphothreonine. Phosphoserine; by CK2 is present on residues S109 and S140. Positions 147–160 (EKHPPKPAKPEKNR) are enriched in basic and acidic residues. At S166 the chain carries Phosphoserine. Residues 206–226 (EIIKEKEPPKQGKEKAKKAEQ) show a composition bias toward basic and acidic residues. The segment covering 227 to 241 (GSEEEGEGEEEEEEG) has biased composition (acidic residues). The residue at position 228 (S228) is a Phosphoserine. One can recognise an ABC transporter 1 domain in the interval 304 to 548 (IKLEKFSISA…MYQQKQKELL (245 aa)). 336–343 (GPNGKGKT) is an ATP binding site. Over residues 559 to 580 (KELKAGGKSTKQAEKQTKEALT) the composition is skewed to basic and acidic residues. Residues 559–602 (KELKAGGKSTKQAEKQTKEALTRKQQKCRRKNQDEESQEAPELL) are disordered. A Phosphoserine modification is found at S595. The 216-residue stretch at 625-840 (LGLHGVTFGY…VLEALGEVMV (216 aa)) folds into the ABC transporter 2 domain. Position 658-665 (658-665 (GPNGVGKS)) interacts with ATP.

The protein belongs to the ABC transporter superfamily. ABCF family. EF3 subfamily. As to quaternary structure, isoform 2 interacts (via N-terminus) with EIF2S1; the interaction is independent of its phosphorylated status. Isoform 2 associates (via both ABC transporter domains) with the ribosomes. In terms of processing, isoform 2 is phosphorylated at phosphoserine and phosphothreonine. Isoform 2 phosphorylation on Ser-109 and Ser-140 by CK2 inhibits association of EIF2 with ribosomes. In terms of tissue distribution, ubiquitous.

The protein localises to the cytoplasm. It localises to the nucleus. The protein resides in the nucleoplasm. It is found in the nucleus envelope. Isoform 2 is required for efficient Cap- and IRES-mediated mRNA translation initiation. Isoform 2 is not involved in the ribosome biogenesis. The sequence is that of ATP-binding cassette sub-family F member 1 (ABCF1) from Homo sapiens (Human).